The primary structure comprises 769 residues: MCGSALAFFTAAFVCLQNDRRGPASFLWAAWVFSLVLGLGQGEDNRCASSNAASCARCLALGPECGWCVQEDFISGGSRSERCDIVSNLISKGCSVDSIEYPSVHVIIPTENEINTQVTPGEVSIQLRPGAEANFMLKVHPLKKYPVDLYYLVDVSASMHNNIEKLNSVGNDLSRKMAFFSRDFRLGFGSYVDKTVSPYISIHPERIHNQCSDYNLDCMPPHGYIHVLSLTENITEFEKAVHRQKISGNIDTPEGGFDAMLQAAVCESHIGWRKEAKRLLLVMTDQTSHLALDSKLAGIVVPNDGNCHLKNNVYVKSTTMEHPSLGQLSEKLIDNNINVIFAVQGKQFHWYKDLLPLLPGTIAGEIESKAANLNNLVVEAYQKLISEVKVQVENQVQGIYFNITAICPDGSRKPGMEGCRNVTSNDEVLFNVTVTMKKCDVTGGKNYAIIKPIGFNETAKIHIHRNCSCQCEDNRGPKGKCVDETFLDSKCFQCDENKCHFDEDQFSSESCKSHKDQPVCSGRGVCVCGKCSCHKIKLGKVYGKYCEKDDFSCPYHHGNLCAGHGECEAGRCQCFSGWEGDRCQCPSAAAQHCVNSKGQVCSGRGTCVCGRCECTDPRSIGRFCEHCPTCYTACKENWNCMQCLHPHNLSQAILDQCKTSCALMEQQHYVDQTSECFSSPSYLRIFFIIFIVTFLIGLLKVLIIRQVILQWNSNKIKSSSDYRVSASKKDKLILQSVCTRAVTYRREKPEEIKMDISKLNAHETFRCNF.

An N-terminal signal peptide occupies residues 1 to 42 (MCGSALAFFTAAFVCLQNDRRGPASFLWAAWVFSLVLGLGQG). Over 43–684 (EDNRCASSNA…ECFSSPSYLR (642 aa)) the chain is Extracellular. A PSI domain is found at 46–95 (RCASSNAASCARCLALGPECGWCVQEDFISGGSRSERCDIVSNLISKGCS). 25 disulfides stabilise this stretch: Cys-47-Cys-65, Cys-55-Cys-469, Cys-58-Cys-83, Cys-68-Cys-94, Cys-211-Cys-218, Cys-266-Cys-307, Cys-407-Cys-419, Cys-439-Cys-467, Cys-471-Cys-491, Cys-471-Cys-494, Cys-481-Cys-494, Cys-499-Cys-528, Cys-511-Cys-526, Cys-520-Cys-531, Cys-533-Cys-546, Cys-553-Cys-567, Cys-561-Cys-572, Cys-574-Cys-583, Cys-585-Cys-609, Cys-593-Cys-607, Cys-601-Cys-612, Cys-614-Cys-624, Cys-627-Cys-630, Cys-634-Cys-661, and Cys-640-Cys-657. The VWFA domain maps to 146–384 (PVDLYYLVDV…NLVVEAYQKL (239 aa)). Positions 154 and 156 each coordinate Mg(2+). Position 193 (Asp-193) interacts with Ca(2+). Residue Asn-233 is glycosylated (N-linked (GlcNAc...) asparagine). Ca(2+)-binding residues include Asn-249, Asp-251, Pro-253, and Glu-254. Glu-254 provides a ligand contact to Mg(2+). N-linked (GlcNAc...) asparagine glycosylation occurs at Asn-402. 4 N-linked (GlcNAc...) asparagine glycosylation sites follow: Asn-421, Asn-431, Asn-456, and Asn-466. 4 I-EGF domains span residues 471–495 (CEDN…FQCD), 499–547 (CHFD…KYCE), 548–584 (KDDF…DRCQ), and 585–625 (CPSA…RFCE). N-linked (GlcNAc...) asparagine glycosylation occurs at Asn-648. Residues 685–704 (IFFIIFIVTFLIGLLKVLII) traverse the membrane as a helical segment. Over 705–769 (RQVILQWNSN…NAHETFRCNF (65 aa)) the chain is Cytoplasmic.

It belongs to the integrin beta chain family. As to quaternary structure, heterodimer of an alpha and a beta subunit. Beta-8 (ITGB8) associates with alpha-V (ITGAV) to form ITGAV:ITGB8. ITGAV:ITGB8 interacts with TGFB1. In terms of tissue distribution, placenta, kidney, brain, ovary, uterus and in several transformed cells. Transiently expressed in 293 human embryonic kidney cells.

The protein localises to the cell membrane. Its function is as follows. Integrin alpha-V:beta-8 (ITGAV:ITGB8) is a receptor for fibronectin. It recognizes the sequence R-G-D in its ligands. Integrin alpha-V:beta-6 (ITGAV:ITGB6) mediates R-G-D-dependent release of transforming growth factor beta-1 (TGF-beta-1) from regulatory Latency-associated peptide (LAP), thereby playing a key role in TGF-beta-1 activation on the surface of activated regulatory T-cells (Tregs). Required during vasculogenesis. The chain is Integrin beta-8 from Homo sapiens (Human).